Reading from the N-terminus, the 425-residue chain is Light-independent protochlorophyllide reductase subunit N (425 aa).

Residues Cys-17, Cys-42, and Cys-103 each contribute to the [4Fe-4S] cluster site.

This sequence belongs to the BchN/ChlN family. Protochlorophyllide reductase is composed of three subunits; ChlL, ChlN and ChlB. Forms a heterotetramer of two ChlB and two ChlN subunits. It depends on [4Fe-4S] cluster as a cofactor.

It carries out the reaction chlorophyllide a + oxidized 2[4Fe-4S]-[ferredoxin] + 2 ADP + 2 phosphate = protochlorophyllide a + reduced 2[4Fe-4S]-[ferredoxin] + 2 ATP + 2 H2O. It participates in porphyrin-containing compound metabolism; chlorophyll biosynthesis (light-independent). Its function is as follows. Component of the dark-operative protochlorophyllide reductase (DPOR) that uses Mg-ATP and reduced ferredoxin to reduce ring D of protochlorophyllide (Pchlide) to form chlorophyllide a (Chlide). This reaction is light-independent. The NB-protein (ChlN-ChlB) is the catalytic component of the complex. The protein is Light-independent protochlorophyllide reductase subunit N of Parasynechococcus marenigrum (strain WH8102).